We begin with the raw amino-acid sequence, 177 residues long: Adenine phosphoribosyltransferase (177 aa).

It belongs to the purine/pyrimidine phosphoribosyltransferase family. As to quaternary structure, homodimer.

The protein resides in the cytoplasm. It carries out the reaction AMP + diphosphate = 5-phospho-alpha-D-ribose 1-diphosphate + adenine. It participates in purine metabolism; AMP biosynthesis via salvage pathway; AMP from adenine: step 1/1. In terms of biological role, catalyzes a salvage reaction resulting in the formation of AMP, that is energically less costly than de novo synthesis. The protein is Adenine phosphoribosyltransferase of Mycobacteroides abscessus (strain ATCC 19977 / DSM 44196 / CCUG 20993 / CIP 104536 / JCM 13569 / NCTC 13031 / TMC 1543 / L948) (Mycobacterium abscessus).